The chain runs to 392 residues: Anhydro-N-acetylmuramic acid kinase (392 aa).

22–29 (GTSMDGVD) contacts ATP.

It belongs to the anhydro-N-acetylmuramic acid kinase family.

The enzyme catalyses 1,6-anhydro-N-acetyl-beta-muramate + ATP + H2O = N-acetyl-D-muramate 6-phosphate + ADP + H(+). It functions in the pathway amino-sugar metabolism; 1,6-anhydro-N-acetylmuramate degradation. The protein operates within cell wall biogenesis; peptidoglycan recycling. Its function is as follows. Catalyzes the specific phosphorylation of 1,6-anhydro-N-acetylmuramic acid (anhMurNAc) with the simultaneous cleavage of the 1,6-anhydro ring, generating MurNAc-6-P. Is required for the utilization of anhMurNAc either imported from the medium or derived from its own cell wall murein, and thus plays a role in cell wall recycling. The protein is Anhydro-N-acetylmuramic acid kinase of Burkholderia pseudomallei (strain 1106a).